Reading from the N-terminus, the 314-residue chain is Ferric-anguibactin transport system permease protein FatD (314 aa).

The next 10 membrane-spanning stretches (helical) occupy residues 1–21, 49–69, 76–96, 103–123, 132–152, 180–200, 207–226, 230–252, 265–285, and 288–308; these read MTFR…FFGA, VALI…QHIV, PGTT…IVML, ERMF…IAII, ALVP…AEFY, IIFL…RFTV, IASN…LILV, VAVT…NLVA, IVAL…RVVL, and FEVP…LAFL.

Belongs to the binding-protein-dependent transport system permease family. FecCD subfamily. As to quaternary structure, part of an iron transport system composed of the outer membrane receptor FatA, the periplasmic binding protein FatB and the inner membrane proteins FatC and FatD.

It localises to the cell inner membrane. Its function is as follows. Involved in the uptake of iron in complex with the siderophore anguibactin. Responsible for the translocation of ferric-anguibactin across the cytoplasmic membrane. The polypeptide is Ferric-anguibactin transport system permease protein FatD (Vibrio anguillarum (strain ATCC 68554 / 775) (Listonella anguillarum)).